The chain runs to 752 residues: Catalase-peroxidase 1 (752 aa).

A disordered region spans residues 1-45 (MPPNTPDASDARPPQADTETHSHSESENPVIESPKPKAHAPLTNQ). A cross-link (tryptophyl-tyrosyl-methioninium (Trp-Tyr) (with M-270)) is located at residues 116-244 (WHAAGTYRIF…YGATTMGLIY (129 aa)). The Proton acceptor role is filled by H117. A cross-link (tryptophyl-tyrosyl-methioninium (Tyr-Met) (with W-116)) is located at residues 244–270 (YVNPEGPEGKPDPLAAAHDIRETFGRM). A heme b-binding site is contributed by H285.

This sequence belongs to the peroxidase family. Peroxidase/catalase subfamily. As to quaternary structure, homodimer or homotetramer. Heme b serves as cofactor. Post-translationally, formation of the three residue Trp-Tyr-Met cross-link is important for the catalase, but not the peroxidase activity of the enzyme.

It carries out the reaction H2O2 + AH2 = A + 2 H2O. The catalysed reaction is 2 H2O2 = O2 + 2 H2O. Bifunctional enzyme with both catalase and broad-spectrum peroxidase activity. May play a role in the intracellular survival of mycobacteria. The polypeptide is Catalase-peroxidase 1 (Mycolicibacterium fortuitum (Mycobacterium fortuitum)).